Here is a 215-residue protein sequence, read N- to C-terminus: Small ribosomal subunit protein uS5 (215 aa).

The span at methionine 1–asparagine 11 shows a compositional bias: polar residues. The interval methionine 1 to glutamate 61 is disordered. The segment covering alanine 12 to glutamine 28 has biased composition (low complexity). The segment covering arginine 39–glutamate 61 has biased composition (basic and acidic residues). The region spanning tryptophan 59–valine 122 is the S5 DRBM domain.

This sequence belongs to the universal ribosomal protein uS5 family. As to quaternary structure, part of the 30S ribosomal subunit. Contacts proteins S4 and S8.

With S4 and S12 plays an important role in translational accuracy. In terms of biological role, located at the back of the 30S subunit body where it stabilizes the conformation of the head with respect to the body. The protein is Small ribosomal subunit protein uS5 of Synechococcus sp. (strain CC9902).